The chain runs to 871 residues: Probable inorganic carbon transporter subunit DabA (871 aa).

Residues Cys396, Asp398, His577, and Cys592 each contribute to the Zn(2+) site.

The protein belongs to the inorganic carbon transporter (TC 9.A.2) DabA family. Forms a complex with DabB. Zn(2+) is required as a cofactor.

It localises to the cell membrane. In terms of biological role, part of an energy-coupled inorganic carbon pump. The chain is Probable inorganic carbon transporter subunit DabA from Bacillus subtilis (strain 168).